The sequence spans 241 residues: Adenylate kinase 3 (241 aa).

38-43 (GCGKGT) provides a ligand contact to ATP. The tract at residues 58–87 (ATGDMLRAAVAAKTPLGIKAKEAMDKGELV) is NMP. AMP is bound by residues threonine 59, arginine 64, 85–87 (ELV), 113–116 (GFPR), and glutamine 120. An LID region spans residues 154-191 (GRWIHPSSGRSYHTKFAPPKTPGLDDVTGEPLIQRKDD). Arginine 155 is an ATP binding site. AMP contacts are provided by arginine 188 and arginine 199.

Belongs to the adenylate kinase family.

Its subcellular location is the cytoplasm. It catalyses the reaction AMP + ATP = 2 ADP. Its function is as follows. Catalyzes the reversible transfer of the terminal phosphate group between ATP and AMP. Plays an important role in cellular energy homeostasis and in adenine nucleotide metabolism. The sequence is that of Adenylate kinase 3 (ADK-A) from Oryza sativa subsp. japonica (Rice).